The sequence spans 148 residues: Ribonuclease pancreatic (148 aa).

Residues 1-25 form the signal peptide; that stretch reads MGLEKSLILFPLLVLVVGWVQPSLG. Residues Lys32, Arg35, 65 to 69, Lys90, and Arg109 each bind substrate; that span reads KPVNT. Disulfide bonds link Cys50–Cys108, Cys64–Cys119, Cys82–Cys134, and Cys89–Cys96. His143 functions as the Proton donor in the catalytic mechanism.

Belongs to the pancreatic ribonuclease family. Monomer. Interacts with and forms tight 1:1 complexes with RNH1. Dimerization of two such complexes may occur. Interaction with RNH1 inhibits this protein. As to expression, pancreas.

The protein resides in the secreted. It carries out the reaction an [RNA] containing cytidine + H2O = an [RNA]-3'-cytidine-3'-phosphate + a 5'-hydroxy-ribonucleotide-3'-[RNA].. It catalyses the reaction an [RNA] containing uridine + H2O = an [RNA]-3'-uridine-3'-phosphate + a 5'-hydroxy-ribonucleotide-3'-[RNA].. Its function is as follows. Endonuclease that catalyzes the cleavage of RNA on the 3' side of pyrimidine nucleotides. Acts on single-stranded and double-stranded RNA. This Peromyscus leucopus (White-footed mouse) protein is Ribonuclease pancreatic (RNASE1).